Consider the following 400-residue polypeptide: Probable vacuolar protease A (400 aa).

A signal peptide spans 1-18; the sequence is MKGSLLLAGATLLGCTSA. Positions 19 to 72 are cleaved as a propeptide — activation peptide; sequence KLHSLKLKKVSLKEQLEHADIDVQIKSLGQKYMGIRPEQHEQQMFKEQTPIEVE. The region spanning 87 to 397 is the Peptidase A1 domain; the sequence is YFSEISIGTP…DLGKGTVGLA (311 aa). Residue Asp105 is part of the active site. A disulfide bridge connects residues Cys118 and Cys123. Asn140 is a glycosylation site (N-linked (GlcNAc...) asparagine). Residue Asp289 is part of the active site. Cys323 and Cys356 form a disulfide bridge. Asn340 carries N-linked (GlcNAc...) asparagine glycosylation.

Belongs to the peptidase A1 family.

The protein localises to the vacuole lumen. It is found in the secreted. It carries out the reaction Hydrolysis of proteins with broad specificity for peptide bonds. Cleaves -Leu-Leu-|-Val-Tyr- bond in a synthetic substrate. Does not act on esters of Tyr or Arg.. Functionally, vacuolar aspartic endopeptidase which is probably also secreted and contributes to virulence. This is Probable vacuolar protease A (PEP2) from Arthroderma benhamiae (strain ATCC MYA-4681 / CBS 112371) (Trichophyton mentagrophytes).